We begin with the raw amino-acid sequence, 157 residues long: SsrA-binding protein (157 aa).

The disordered stretch occupies residues 133 to 157; the sequence is LHDKRETEKKRDWSREKSRLLRARG. Positions 135 to 151 are enriched in basic and acidic residues; that stretch reads DKRETEKKRDWSREKSR.

The protein belongs to the SmpB family.

It localises to the cytoplasm. Its function is as follows. Required for rescue of stalled ribosomes mediated by trans-translation. Binds to transfer-messenger RNA (tmRNA), required for stable association of tmRNA with ribosomes. tmRNA and SmpB together mimic tRNA shape, replacing the anticodon stem-loop with SmpB. tmRNA is encoded by the ssrA gene; the 2 termini fold to resemble tRNA(Ala) and it encodes a 'tag peptide', a short internal open reading frame. During trans-translation Ala-aminoacylated tmRNA acts like a tRNA, entering the A-site of stalled ribosomes, displacing the stalled mRNA. The ribosome then switches to translate the ORF on the tmRNA; the nascent peptide is terminated with the 'tag peptide' encoded by the tmRNA and targeted for degradation. The ribosome is freed to recommence translation, which seems to be the essential function of trans-translation. The protein is SsrA-binding protein of Afipia carboxidovorans (strain ATCC 49405 / DSM 1227 / KCTC 32145 / OM5) (Oligotropha carboxidovorans).